Consider the following 130-residue polypeptide: Small ribosomal subunit protein uS11 (130 aa).

Belongs to the universal ribosomal protein uS11 family. As to quaternary structure, part of the 30S ribosomal subunit. Interacts with proteins S7 and S18. Binds to IF-3.

Functionally, located on the platform of the 30S subunit, it bridges several disparate RNA helices of the 16S rRNA. Forms part of the Shine-Dalgarno cleft in the 70S ribosome. This chain is Small ribosomal subunit protein uS11, found in Phytoplasma mali (strain AT).